We begin with the raw amino-acid sequence, 297 residues long: HTH-type transcriptional regulator AceR (297 aa).

The HTH lysR-type domain maps to M1–T60. The H-T-H motif DNA-binding region spans F20–A39.

Belongs to the LysR transcriptional regulatory family. Homodimer and homotetramer. Binding of chlorhexidine at the inducer-binding domain causes a quaternary structural change that favors interactions between dimers to form tetramers.

Its subcellular location is the cytoplasm. In terms of biological role, regulates the expression of the AceI transporter. Binds DNA and chlorhexidine. Binds to regulatory sites within the intergenic region between the aceI and aceR genes, and affects the interaction between RNA polymerase (RNAP) and promoter DNA both in the presence and in the absence of chlorhexidine. In the absence of chlorhexidine, prevents transcription of the aceI gene by disrupting interactions between the promoter DNA and RNAP. In the presence of chlorhexidine, activates expression of aceI. When AceR interacts with chlorhexidine, it undergoes a conformational change and the tetrameric form either releases the DNA or shifts the position of the DNA-binding region to allow RNAP to bind onto the promoter DNA to proceed with aceI transcription. In Acinetobacter baumannii (strain ATCC 17978 / DSM 105126 / CIP 53.77 / LMG 1025 / NCDC KC755 / 5377), this protein is HTH-type transcriptional regulator AceR.